We begin with the raw amino-acid sequence, 521 residues long: Acidic amino acid decarboxylase GADL1 (521 aa).

Lysine 333 bears the N6-(pyridoxal phosphate)lysine mark.

This sequence belongs to the group II decarboxylase family. In terms of assembly, homodimer. Pyridoxal 5'-phosphate is required as a cofactor. As to expression, expressed very weakly in neurons and not detected in astrocytes, brain or liver.

The catalysed reaction is L-aspartate + H(+) = beta-alanine + CO2. It catalyses the reaction 3-sulfino-L-alanine + H(+) = hypotaurine + CO2. The enzyme catalyses L-cysteate + H(+) = taurine + CO2. In terms of biological role, may catalyze the decarboxylation of L-aspartate, 3-sulfino-L-alanine (cysteine sulfinic acid), and L-cysteate to beta-alanine, hypotaurine and taurine, respectively. Does not exhibit any decarboxylation activity toward glutamate. This is Acidic amino acid decarboxylase GADL1 (GADL1) from Homo sapiens (Human).